Consider the following 332-residue polypeptide: 2,3-diketo-L-gulonate reductase (332 aa).

The active-site Proton donor is His-44. Residues 168-174 (ITMVDMS), 224-225 (WK), and 304-306 (GHE) contribute to the NAD(+) site.

Belongs to the LDH2/MDH2 oxidoreductase family. DlgD subfamily. In terms of assembly, homodimer.

Its subcellular location is the cytoplasm. It carries out the reaction 3-dehydro-L-gulonate + NAD(+) = 2,3-dioxo-L-gulonate + NADH + H(+). It catalyses the reaction 3-dehydro-L-gulonate + NADP(+) = 2,3-dioxo-L-gulonate + NADPH + H(+). Functionally, catalyzes the reduction of 2,3-diketo-L-gulonate in the presence of NADH, to form 3-keto-L-gulonate. This Klebsiella oxytoca protein is 2,3-diketo-L-gulonate reductase.